The primary structure comprises 155 residues: MSRRGTAEEKTAKPDPIYWNRLVNMLVNRILKHGKKSLAYQIIYRALKKIQQKTEKNPLYVLRQAIRGVTPDIAVKARRVGGSTHQVPIEIGSTQGKALAVRWLLVASKKRPGQNMAFKLSSELVDAAKGSGDAIRKKEETHKMAEASRAFAHLR.

Belongs to the universal ribosomal protein uS7 family. Part of the 30S ribosomal subunit.

Its subcellular location is the plastid. Functionally, one of the primary rRNA binding proteins, it binds directly to 16S rRNA where it nucleates assembly of the head domain of the 30S subunit. In Epifagus virginiana (Beechdrops), this protein is Small ribosomal subunit protein uS7cz/uS7cy (rps7-A).